The following is a 378-amino-acid chain: Alpha-(1,3)-fucosyltransferase fut-5 (378 aa).

The Cytoplasmic segment spans residues 1–7 (MKHNTLR). Residues 8–28 (AVFQFSFFIGICTFIMIAGYS) traverse the membrane as a helical; Signal-anchor for type II membrane protein segment. Residues 29 to 378 (YQINYNQRMG…CDNSFATRFL (350 aa)) lie on the Lumenal side of the membrane. Asn44, Asn88, Asn105, Asn143, Asn171, and Asn307 each carry an N-linked (GlcNAc...) asparagine glycan.

Belongs to the glycosyltransferase 10 family. The cofactor is Ca(2+). Post-translationally, N-glycosylated.

It is found in the golgi apparatus. The protein localises to the golgi stack membrane. The enzyme catalyses a beta-D-galactosyl-(1-&gt;3)-N-acetyl-beta-D-glucosaminyl derivative + GDP-beta-L-fucose = a beta-D-galactosyl-(1-&gt;3)-[alpha-L-fucosyl-(1-&gt;4)]-N-acetyl-beta-D-glucosaminyl derivative + GDP + H(+). Its pathway is protein modification; protein glycosylation. Inhibited by Cu(2+) and Ni(2+), and to a lesser extent by EDTA, Mn(2+) and Mg(2+). In terms of biological role, catalyzes the addition of fucose in alpha 1-3 linkage to GalNAc-beta-1-&gt;4-GlcNAc-beta-1-&gt;3-Gal-beta-1-&gt;4-Glc (LDNT)acceptor. Unlike fut-1, does not add fucose to Man-alpha-1-&gt;3-(Man-alpha-1-&gt;6)-Man-beta-1-&gt;4-GlcNAc-beta-1-&gt;4-GlcNAc-beta-1-Asn (M3), Man-alpha-1-&gt;3-(Man-alpha-1-&gt;6)-Man-beta-1-&gt;4-GlcNAc-beta-1-&gt;4-(Fuc-alpha-1-&gt;6)-GlcNAc-beta-1-Asn (M3F6) or GlcNAc-beta-1-&gt;2-Man-alpha-1-&gt;3-(GlcNAc-beta-1-&gt;2-Man-alpha-1-&gt;6)-Man-beta-1-4-GlcNAc-beta-1-&gt;4-(Fuc-alpha-1-&gt;6)-GlcNAc-beta-1-Asn (GnM3F6) acceptors. In Caenorhabditis elegans, this protein is Alpha-(1,3)-fucosyltransferase fut-5.